An 841-amino-acid polypeptide reads, in one-letter code: Rhomboid-like protease 5 (841 aa).

The segment covering Met-1–Leu-10 has biased composition (low complexity). The disordered stretch occupies residues Met-1–Ser-289. Basic and acidic residues predominate over residues Gly-11–Glu-51. Residues Leu-95–Ser-132 are compositionally biased toward low complexity. Basic and acidic residues-rich tracts occupy residues Leu-154 to Glu-163, Arg-209 to Val-230, and Ser-243 to Asp-275. The next 6 helical transmembrane spans lie at Phe-323 to Leu-343, Met-464 to Val-484, Trp-492 to Val-512, Val-526 to Ile-546, Phe-571 to Ile-590, and Phe-673 to Pro-693. Residue Ser-531 is the Nucleophile of the active site. The active site involves His-585.

It belongs to the peptidase S54 family.

The protein localises to the membrane. The catalysed reaction is Cleaves type-1 transmembrane domains using a catalytic dyad composed of serine and histidine that are contributed by different transmembrane domains.. Functionally, serine protease involved in intramembrane proteolysis. Cleaves microneme adhesins, such as MIC2. This step is essential for efficient invasion of host cells. Catalyzes intramembrane proteolysis of AMA1. In Toxoplasma gondii, this protein is Rhomboid-like protease 5 (ROM5).